Here is a 59-residue protein sequence, read N- to C-terminus: Small ribosomal subunit protein bS21A (59 aa).

It belongs to the bacterial ribosomal protein bS21 family.

In Gloeobacter violaceus (strain ATCC 29082 / PCC 7421), this protein is Small ribosomal subunit protein bS21A.